The primary structure comprises 438 residues: Glutamate-1-semialdehyde 2,1-aminomutase (438 aa).

Residue Lys-277 is modified to N6-(pyridoxal phosphate)lysine.

It belongs to the class-III pyridoxal-phosphate-dependent aminotransferase family. HemL subfamily. In terms of assembly, homodimer. Requires pyridoxal 5'-phosphate as cofactor.

The protein localises to the cytoplasm. The enzyme catalyses (S)-4-amino-5-oxopentanoate = 5-aminolevulinate. It functions in the pathway porphyrin-containing compound metabolism; protoporphyrin-IX biosynthesis; 5-aminolevulinate from L-glutamyl-tRNA(Glu): step 2/2. It participates in porphyrin-containing compound metabolism; chlorophyll biosynthesis. This Synechococcus sp. (strain CC9311) protein is Glutamate-1-semialdehyde 2,1-aminomutase.